Here is a 600-residue protein sequence, read N- to C-terminus: MNNQKYIRNFSIIAHIDHGKSTLADRLIEYCGGLQAREMSQQVLDSMDIEKERGITIKAQTVRLVYKAKDGNTYYLNLMDTPGHVDFAYEVSRSLAACEGSLLVVDSTQGVEAQTLANVYQAIENDHEIVPVLNKIDLPASEPDQVKQQIEDIIGIDASEAVLISAKSGIGIDLVLEAIVNKLPPPKESSTDILKALLVDSWYDPYLGVVILVRVIDGSLRKNMKVKMMATNSVYTIENVGYFTPKKHISDVLHAGEIGFFTASIKQVADCKVGDTITDEKKPCKQALPGFKPNLPVVFCGLYPTDSSEFEHLKDSLAKLRLNDASFEYEMESSSALGVGFRCGFLGLLHLEIIQERLSREFDLDLITTAPSVVYKIHMREGEVLEIHNPADLPDLQKIDSMEEPWIKATIMVPDEFLGAVLSLCTEKRGIQLDHNYIANRAKVVYKLPLNEIVYDFYDRLKSCSKGYASFEWQMDTYEPSELVKLGILVNSEVVDALSTIVHRSRAEQRGRALCVRLKDLIPRQQIDIAIQASIGSRIIARETIKALRKDVLSKCYGGDITRKRKLLEKQKAGKKRMRQYGNIEIPQSAFIAALKIGDE.

Residues 5 to 187 (KYIRNFSIIA…AIVNKLPPPK (183 aa)) enclose the tr-type G domain. GTP-binding positions include 17–22 (DHGKST) and 134–137 (NKID).

It belongs to the TRAFAC class translation factor GTPase superfamily. Classic translation factor GTPase family. LepA subfamily.

The protein localises to the cell inner membrane. The catalysed reaction is GTP + H2O = GDP + phosphate + H(+). Its function is as follows. Required for accurate and efficient protein synthesis under certain stress conditions. May act as a fidelity factor of the translation reaction, by catalyzing a one-codon backward translocation of tRNAs on improperly translocated ribosomes. Back-translocation proceeds from a post-translocation (POST) complex to a pre-translocation (PRE) complex, thus giving elongation factor G a second chance to translocate the tRNAs correctly. Binds to ribosomes in a GTP-dependent manner. This chain is Elongation factor 4, found in Rickettsia bellii (strain OSU 85-389).